A 360-amino-acid polypeptide reads, in one-letter code: UDP-N-acetylglucosamine--N-acetylmuramyl-(pentapeptide) pyrophosphoryl-undecaprenol N-acetylglucosamine transferase (360 aa).

UDP-N-acetyl-alpha-D-glucosamine contacts are provided by residues 14-16, asparagine 131, arginine 167, serine 195, isoleucine 249, and glutamine 294; that span reads TGG.

Belongs to the glycosyltransferase 28 family. MurG subfamily.

The protein localises to the cell inner membrane. It catalyses the reaction di-trans,octa-cis-undecaprenyl diphospho-N-acetyl-alpha-D-muramoyl-L-alanyl-D-glutamyl-meso-2,6-diaminopimeloyl-D-alanyl-D-alanine + UDP-N-acetyl-alpha-D-glucosamine = di-trans,octa-cis-undecaprenyl diphospho-[N-acetyl-alpha-D-glucosaminyl-(1-&gt;4)]-N-acetyl-alpha-D-muramoyl-L-alanyl-D-glutamyl-meso-2,6-diaminopimeloyl-D-alanyl-D-alanine + UDP + H(+). The protein operates within cell wall biogenesis; peptidoglycan biosynthesis. Its function is as follows. Cell wall formation. Catalyzes the transfer of a GlcNAc subunit on undecaprenyl-pyrophosphoryl-MurNAc-pentapeptide (lipid intermediate I) to form undecaprenyl-pyrophosphoryl-MurNAc-(pentapeptide)GlcNAc (lipid intermediate II). In Polaromonas naphthalenivorans (strain CJ2), this protein is UDP-N-acetylglucosamine--N-acetylmuramyl-(pentapeptide) pyrophosphoryl-undecaprenol N-acetylglucosamine transferase.